The chain runs to 193 residues: dTTP/UTP pyrophosphatase (193 aa).

The Proton acceptor role is filled by D71.

Belongs to the Maf family. YhdE subfamily. It depends on a divalent metal cation as a cofactor.

The protein localises to the cytoplasm. It carries out the reaction dTTP + H2O = dTMP + diphosphate + H(+). It catalyses the reaction UTP + H2O = UMP + diphosphate + H(+). Functionally, nucleoside triphosphate pyrophosphatase that hydrolyzes dTTP and UTP. May have a dual role in cell division arrest and in preventing the incorporation of modified nucleotides into cellular nucleic acids. The chain is dTTP/UTP pyrophosphatase from Citrifermentans bemidjiense (strain ATCC BAA-1014 / DSM 16622 / JCM 12645 / Bem) (Geobacter bemidjiensis).